The chain runs to 297 residues: Probable tyrosine phosphatase protein J2 (297 aa).

The Tyrosine-protein phosphatase domain maps to Asp-21–Tyr-286. The active-site Phosphocysteine intermediate is Cys-227.

The protein belongs to the protein-tyrosine phosphatase family.

The enzyme catalyses O-phospho-L-tyrosyl-[protein] + H2O = L-tyrosyl-[protein] + phosphate. This Microplitis demolitor (Parasitoid wasp) protein is Probable tyrosine phosphatase protein J2 (J3).